We begin with the raw amino-acid sequence, 722 residues long: MGSSCFPQSPLSHSLFSSSSLSSSQFTPLLFSPRNAQKCKKKMPAMACIHSENQKESEFCSRRTILFVGFSVLPLLSLRANAFEGLSVDSQVKAQPQKEETEQTIQGNAENPFFSLLNGLGVFGSGVLGSLYALARNEKAVSDATIESMKNKLKEKEATFVSMEKKFQSELLNERDIRNNQLKRAGEERQALVNQLNSAKSTVTNLGQELQKEKRIAEELIVQIEGLQNNLMQMKEDKKKLQEELKEKLDLIQVLQEKITLLTTEIKDKEASLQSTTSKLAEKESEVDKLSSMYQESQDQLMNLTSEIKELKVEVQKRERELELKRESEDNLNVRLNSLLVERDESKKELDAIQKEYSEFKSISEKKVASDAKLLGEQEKRLHQLEEQLGTASDEVRKNNVLIADLTQEKENLRRMLDAELENISKLKLEVQVTQETLEKSRSDASDIAQQLQQSRHLCSKLEAEVSKLQMELEETRTSLRRNIDETKRGAELLAAELTTTRELLKKTNEEMHTMSHELAAVTENCDNLQTELVDVYKKAERAADELKQEKNIVVTLEKELTFLEAQITREKESRKNLEEELERATESLDEMNRNAFALAKELELANSHISSLEDEREVLQKSVSEQKQISQESRENLEDAHSLVMKLGKERESLEKRAKKLEDEMASAKGEILRLRTQVNSVKAPVNNEEKVEAGEKAAVTVKRTRRRKTATQPASQQESS.

Residues 1–20 (MGSSCFPQSPLSHSLFSSSS) are disordered. The N-terminal 50 residues, 1–50 (MGSSCFPQSPLSHSLFSSSSLSSSQFTPLLFSPRNAQKCKKKMPAMACIH), are a transit peptide targeting the chloroplast. The N-terminal 34 residues, 51-84 (SENQKESEFCSRRTILFVGFSVLPLLSLRANAFE), are a transit peptide targeting the thylakoid. Residues 85–112 (GLSVDSQVKAQPQKEETEQTIQGNAENP) lie on the Lumenal, thylakoid side of the membrane. A helical membrane pass occupies residues 113-133 (FFSLLNGLGVFGSGVLGSLYA). Topologically, residues 134-722 (LARNEKAVSD…TQPASQQESS (589 aa)) are stromal. A coiled-coil region spans residues 146-679 (IESMKNKLKE…KGEILRLRTQ (534 aa)). The interval 687–722 (VNNEEKVEAGEKAAVTVKRTRRRKTATQPASQQESS) is disordered. The short motif at 705 to 712 (RTRRRKTA) is the Nuclear localization signal element.

In terms of assembly, interacts with PTST2; the interaction is essential for the initiation of starch granules biosynthesis in leaf chloroplasts, for the correct location of the process in the stromal spaces between the thylakoid membranes, and for the association of PTST2 with the thylakoid membranes. Post-translationally, predicted to be translocated into the thylakoid by the Tat system.

It localises to the plastid. Its subcellular location is the chloroplast. The protein localises to the chloroplast thylakoid membrane. It is found in the chloroplast stroma. The protein resides in the chloroplast nucleoid. It localises to the nucleus. Its subcellular location is the nucleus matrix. In terms of biological role, required for the initiation of starch granules biosynthesis in leaf chloroplasts. Anchored to the thylakoid membranes with its C-terminus facing into the stroma where it is essential for localizing PTST2 and SS4 to the stromal spaces between the thylakoid membranes in order to begin starch granule formation. Associated with leaf chloroplastic nucleoids in vivo. Binds to various chloroplastic double-stranded DNA fragments without particular sequence specificity in vitro. May function at the interface between nucleoids and thylakoids possibly by anchoring nucleoids to the thylakoid membrane system in mature chloroplasts. Likely to participate in nuclear architecture by connecting chromatin with the nuclear matrix and potentially with the nuclear envelope. The polypeptide is MAR-binding filament-like protein 1-1 (Nicotiana tabacum (Common tobacco)).